A 321-amino-acid polypeptide reads, in one-letter code: Glycerol-3-phosphate dehydrogenase [NAD(P)+] (321 aa).

6 residues coordinate NADPH: S10, W11, R31, R32, Y47, and K98. 3 residues coordinate sn-glycerol 3-phosphate: K98, G125, and S127. An NADPH-binding site is contributed by A129. Residues K177, D230, S240, R241, and N242 each contribute to the sn-glycerol 3-phosphate site. K177 acts as the Proton acceptor in catalysis. An NADPH-binding site is contributed by R241. Residues V265 and E267 each coordinate NADPH.

This sequence belongs to the NAD-dependent glycerol-3-phosphate dehydrogenase family.

It is found in the cytoplasm. It catalyses the reaction sn-glycerol 3-phosphate + NAD(+) = dihydroxyacetone phosphate + NADH + H(+). The enzyme catalyses sn-glycerol 3-phosphate + NADP(+) = dihydroxyacetone phosphate + NADPH + H(+). The protein operates within membrane lipid metabolism; glycerophospholipid metabolism. Functionally, catalyzes the reduction of the glycolytic intermediate dihydroxyacetone phosphate (DHAP) to sn-glycerol 3-phosphate (G3P), the key precursor for phospholipid synthesis. The polypeptide is Glycerol-3-phosphate dehydrogenase [NAD(P)+] (Thermotoga sp. (strain RQ2)).